Consider the following 155-residue polypeptide: Putative pre-16S rRNA nuclease (155 aa).

The protein belongs to the YqgF nuclease family.

It is found in the cytoplasm. In terms of biological role, could be a nuclease involved in processing of the 5'-end of pre-16S rRNA. The protein is Putative pre-16S rRNA nuclease of Xanthomonas campestris pv. campestris (strain 8004).